The chain runs to 965 residues: MKNNLRYGIRKHKLGAASVFLGTMIVIGMGQDKEAAASEQKTTTVEENGNSATDNKVSETQTTTTNVNTIDETQSYSATATEQPSNATQVTTEEAPKAVQAPQTAQPANVETVKEEVVKEEANPQVKETTQSQDNSGDQRQVDLTPKKATQNQVAETQVEVAQPRTALESKPRVTRSTDVAEAKEASDAKVETGTDVTSKVTVEDESKIEAPKGNNVQPHEGQRVVLKYKLKFQDGLKTGDYFDFTLSNNVNTHGVATTRKVPDIKNGSLVMAKGQVLDNGRIRYTFTDYIKDKVNVTANLEINLFIDPKTVQSNGQQTITSKLNGKETSGTMQITYKDGVKNQYTNVNGSIETFDKEKNKFTHVAYIKPINGNNSDSVTVTGMLTQGSNENGTQPNVKIYEYVGVENGLPQSVYANTVDSTQLKDVTNQMGDKLKVQNNGSYSLNFDKLDKTYVIHYTGDYLNGTSEVNFRTQLTGYPENRYKTYYYYNNGYTLTWDNGLVLYSNKANGDGKYGPIVDSNNFEFSEDSGNGSISGQYDAKQIIETEENQDNTPLDIDYHTAIDGEGGYVDGYIETIEETDSSAIDIDYHTAVDSEAGHVGGYTESSEESNPIDFEESTHENSKHHADVVEYEEDTNPGGGQVTTESNLVEFDEESTKGIVTGAVSDHTTVEDTKEYTTESNLIELVDELPEEHGQAQGPVEEITENNHHISHSGLGTENGHGNYGVIEEIEENSHVDIKSELGYEGGQNSGNQSFEEDTEEDKPKYEQGGNIIDIDFDSVPQIHGFNKHNEIIEEDTNKDKPNYQFGGHNSVDFEEDTLPKVSGQNEGQQTIEEDTTPPTPPTPEVPSEPGTPTPPTPEVPSEPGKPTPPTPEVPAEPGKPVPPAKEEPKKPSKPVEQGKVVTPVIEINEKVKAVAPTKQKQAKKSELPETGGEESTNKGMLFGGLFSILGLALLRRNKKNHKA.

An N-terminal signal peptide occupies residues 1–36 (MKNNLRYGIRKHKLGAASVFLGTMIVIGMGQDKEAA). Positions 7–18 (YGIRKHKLGAAS) match the YSIRK-G/S signaling motif motif. The interval 37–206 (ASEQKTTTVE…VTSKVTVEDE (170 aa)) is disordered. The segment at 37-514 (ASEQKTTTVE…SNKANGDGKY (478 aa)) is ligand-binding A region. Polar residues predominate over residues 39-55 (EQKTTTVEENGNSATDN). The span at 59 to 74 (ETQTTTTNVNTIDETQ) shows a compositional bias: low complexity. The segment covering 75-92 (SYSATATEQPSNATQVTT) has biased composition (polar residues). Residues 112 to 122 (TVKEEVVKEEA) show a composition bias toward basic and acidic residues. The segment covering 126–139 (VKETTQSQDNSGDQ) has biased composition (polar residues). Basic and acidic residues predominate over residues 179-193 (DVAEAKEASDAKVET). A fibrinogen/elastin/tropoelastin-binding region spans residues 194 to 514 (GTDVTSKVTV…SNKANGDGKY (321 aa)). A fibronectin-binding region spans residues 515-837 (GPIVDSNNFE…EGQQTIEEDT (323 aa)). Residues 548-577 (ENQDNTPLDIDYHTAIDGEGGYVDGYIETI) form a B-1 repeat. Residues 548–607 (ENQDNTPLDIDYHTAIDGEGGYVDGYIETIEETDSSAIDIDYHTAVDSEAGHVGGYTESS) form a 2 X approximate tandem repeats region. Residues 578–607 (EETDSSAIDIDYHTAVDSEAGHVGGYTESS) form a B-2 repeat. Disordered regions lie at residues 598-625 (GHVG…NSKH), 743-774 (LGYE…GNII), 794-903 (IEED…GKVV), and 916-942 (VAPT…NKGM). A D-1; truncated repeat occupies 748 to 770 (GQNSGNQSFEEDTEEDKPKYEQG). A 4 X approximate tandem repeats region spans residues 748 to 839 (GQNSGNQSFE…QQTIEEDTTP (92 aa)). The stretch at 771–785 (GNIIDIDFDSVPQIH) is one D-2; truncated repeat. The stretch at 786–824 (GFNKHNEIIEEDTNKDKPNYQFGGHNSVDFEEDTLPKVS) is one D-3 repeat. The segment covering 794–803 (IEEDTNKDKP) has biased composition (basic and acidic residues). The D-4; truncated repeat unit spans residues 825 to 839 (GQNEGQQTIEEDTTP). A compositionally biased stretch (pro residues) spans 839-885 (PPTPPTPEVPSEPGTPTPPTPEVPSEPGKPTPPTPEVPAEPGKPVPP). 4 WR repeats span residues 840 to 853 (PTPP…EPGT), 854 to 867 (PTPP…EPGK), 868 to 881 (PTPP…EPGK), and 882 to 895 (PVPP…KPSK). Positions 840-895 (PTPPTPEVPSEPGTPTPPTPEVPSEPGKPTPPTPEVPAEPGKPVPPAKEEPKKPSK) are 4 X tandem repeats, Pro-rich (WR). The short motif at 929–933 (LPETG) is the LPXTG sorting signal element. Thr932 bears the Pentaglycyl murein peptidoglycan amidated threonine mark. A propeptide spans 933–965 (GGEESTNKGMLFGGLFSILGLALLRRNKKNHKA) (removed by sortase).

It localises to the secreted. The protein localises to the cell wall. Its function is as follows. Promotes bacterial attachment to multiple substrates, such as fibronectin (Fn), fibrinogen (Fg), elastin peptides and tropoelastin. This confers to S.aureus the ability to invade endothelial cells. Promotes adherence to and aggregation of activated platelets. This Staphylococcus aureus (strain MRSA252) protein is Fibronectin-binding protein A (fnbA).